A 109-amino-acid chain; its full sequence is Iron-sulfur cluster assembly protein CyaY (109 aa).

It belongs to the frataxin family.

Involved in iron-sulfur (Fe-S) cluster assembly. May act as a regulator of Fe-S biogenesis. This chain is Iron-sulfur cluster assembly protein CyaY, found in Shewanella putrefaciens (strain CN-32 / ATCC BAA-453).